The primary structure comprises 189 residues: Probable nicotinate-nucleotide adenylyltransferase (189 aa).

Belongs to the NadD family.

The enzyme catalyses nicotinate beta-D-ribonucleotide + ATP + H(+) = deamido-NAD(+) + diphosphate. It participates in cofactor biosynthesis; NAD(+) biosynthesis; deamido-NAD(+) from nicotinate D-ribonucleotide: step 1/1. Its function is as follows. Catalyzes the reversible adenylation of nicotinate mononucleotide (NaMN) to nicotinic acid adenine dinucleotide (NaAD). This is Probable nicotinate-nucleotide adenylyltransferase from Staphylococcus aureus (strain MRSA252).